The chain runs to 237 residues: Phosphoribosylaminoimidazole-succinocarboxamide synthase (237 aa).

It belongs to the SAICAR synthetase family.

The catalysed reaction is 5-amino-1-(5-phospho-D-ribosyl)imidazole-4-carboxylate + L-aspartate + ATP = (2S)-2-[5-amino-1-(5-phospho-beta-D-ribosyl)imidazole-4-carboxamido]succinate + ADP + phosphate + 2 H(+). The protein operates within purine metabolism; IMP biosynthesis via de novo pathway; 5-amino-1-(5-phospho-D-ribosyl)imidazole-4-carboxamide from 5-amino-1-(5-phospho-D-ribosyl)imidazole-4-carboxylate: step 1/2. This Pectobacterium atrosepticum (strain SCRI 1043 / ATCC BAA-672) (Erwinia carotovora subsp. atroseptica) protein is Phosphoribosylaminoimidazole-succinocarboxamide synthase.